We begin with the raw amino-acid sequence, 72 residues long: Translational regulator CsrA (72 aa).

This sequence belongs to the CsrA/RsmA family. As to quaternary structure, homodimer; the beta-strands of each monomer intercalate to form a hydrophobic core, while the alpha-helices form wings that extend away from the core.

The protein localises to the cytoplasm. Its function is as follows. A translational regulator that binds mRNA to regulate translation initiation and/or mRNA stability. Usually binds in the 5'-UTR at or near the Shine-Dalgarno sequence preventing ribosome-binding, thus repressing translation. Its main target seems to be the major flagellin gene, while its function is anatagonized by FliW. This chain is Translational regulator CsrA, found in Clostridium botulinum (strain ATCC 19397 / Type A).